The primary structure comprises 213 residues: Ribosomal RNA small subunit methyltransferase G (213 aa).

S-adenosyl-L-methionine contacts are provided by residues G75, F80, 128–129 (IE), and R144.

This sequence belongs to the methyltransferase superfamily. RNA methyltransferase RsmG family.

Its subcellular location is the cytoplasm. It catalyses the reaction guanosine(527) in 16S rRNA + S-adenosyl-L-methionine = N(7)-methylguanosine(527) in 16S rRNA + S-adenosyl-L-homocysteine. Functionally, specifically methylates the N7 position of guanine in position 527 of 16S rRNA. This Brucella anthropi (strain ATCC 49188 / DSM 6882 / CCUG 24695 / JCM 21032 / LMG 3331 / NBRC 15819 / NCTC 12168 / Alc 37) (Ochrobactrum anthropi) protein is Ribosomal RNA small subunit methyltransferase G.